Consider the following 375-residue polypeptide: Glutaconyl-CoA decarboxylase subunit beta (375 aa).

A run of 11 helical transmembrane segments spans residues 16 to 39, 46 to 65, 74 to 96, 107 to 130, 137 to 153, 160 to 178, 208 to 232, 254 to 271, 284 to 302, 316 to 332, and 345 to 369; these read GFVA…YLAI, LLLS…RTGF, LILG…GAMT, TLLL…LLGF, AIGI…IYLA, LLGA…VPLI, VVFP…IGML, ALMN…GLTM, IICL…GVLF, PLIG…AARV, and FLLM…GTML.

The protein belongs to the GcdB/MmdB/OadB family. In terms of assembly, heterooctamer consisting of two alpha, two beta, two gamma and two delta subunits. In terms of processing, the N-terminus is blocked.

The protein resides in the cell membrane. The catalysed reaction is (2E)-glutaconyl-CoA + Na(+)(in) + H(+) = (2E)-butenoyl-CoA + Na(+)(out) + CO2. Its pathway is amino-acid degradation; L-glutamate degradation via hydroxyglutarate pathway; crotonoyl-CoA from L-glutamate: step 5/5. Its function is as follows. Tunnel subunit of the primary sodium pump glutaconyl-CoA decarboxylase (GCD). This chain is Glutaconyl-CoA decarboxylase subunit beta (gcdB), found in Acidaminococcus fermentans (strain ATCC 25085 / DSM 20731 / CCUG 9996 / CIP 106432 / VR4).